We begin with the raw amino-acid sequence, 233 residues long: Large ribosomal subunit protein eL6x (233 aa).

The segment covering histidine 48–lysine 72 has biased composition (basic and acidic residues). Positions histidine 48–alanine 80 are disordered.

The protein belongs to the eukaryotic ribosomal protein eL6 family.

This chain is Large ribosomal subunit protein eL6x (RPL6C), found in Arabidopsis thaliana (Mouse-ear cress).